A 113-amino-acid chain; its full sequence is 14 kDa zinc-binding protein (113 aa).

The HIT domain occupies 3-113 (IFGKIISKEI…GGRQMNWPPG (111 aa)). The short motif at 97–101 (HIHVH) is the Histidine triad motif element.

As to quaternary structure, homodimer.

The chain is 14 kDa zinc-binding protein from Brassica juncea (Indian mustard).